Here is a 239-residue protein sequence, read N- to C-terminus: 2,3,4,5-tetrahydropyridine-2,6-dicarboxylate N-acetyltransferase (239 aa).

This sequence belongs to the transferase hexapeptide repeat family. DapH subfamily.

It carries out the reaction (S)-2,3,4,5-tetrahydrodipicolinate + acetyl-CoA + H2O = L-2-acetamido-6-oxoheptanedioate + CoA. Its pathway is amino-acid biosynthesis; L-lysine biosynthesis via DAP pathway; LL-2,6-diaminopimelate from (S)-tetrahydrodipicolinate (acetylase route): step 1/3. Its function is as follows. Catalyzes the transfer of an acetyl group from acetyl-CoA to tetrahydrodipicolinate. The chain is 2,3,4,5-tetrahydropyridine-2,6-dicarboxylate N-acetyltransferase from Staphylococcus aureus (strain Newman).